Consider the following 43-residue polypeptide: Potassium channel toxin gamma-KTx 4.8 (43 aa).

Cystine bridges form between Cys-5-Cys-23, Cys-11-Cys-34, Cys-20-Cys-39, and Cys-24-Cys-41.

Belongs to the ergtoxin family. Gamma-KTx 4 subfamily. As to expression, expressed by the venom gland.

The protein localises to the secreted. In terms of biological role, reversibly blocks Kv11/ERG potassium channels. The sequence is that of Potassium channel toxin gamma-KTx 4.8 from Centruroides elegans (Bark scorpion).